A 346-amino-acid polypeptide reads, in one-letter code: 3',5'-cyclic-nucleotide phosphodiesterase (346 aa).

The protein belongs to the cyclic nucleotide phosphodiesterase class-II family.

The catalysed reaction is a nucleoside 3',5'-cyclic phosphate + H2O = a nucleoside 5'-phosphate + H(+). This chain is 3',5'-cyclic-nucleotide phosphodiesterase (cgs2), found in Schizosaccharomyces pombe (strain 972 / ATCC 24843) (Fission yeast).